We begin with the raw amino-acid sequence, 907 residues long: Phosphoenolpyruvate carboxylase (907 aa).

Active-site residues include His138 and Lys570.

This sequence belongs to the PEPCase type 1 family. Mg(2+) is required as a cofactor.

The catalysed reaction is oxaloacetate + phosphate = phosphoenolpyruvate + hydrogencarbonate. Functionally, forms oxaloacetate, a four-carbon dicarboxylic acid source for the tricarboxylic acid cycle. The polypeptide is Phosphoenolpyruvate carboxylase (Streptococcus mutans serotype c (strain ATCC 700610 / UA159)).